We begin with the raw amino-acid sequence, 156 residues long: Probable chemoreceptor glutamine deamidase CheD (156 aa).

It belongs to the CheD family.

It catalyses the reaction L-glutaminyl-[protein] + H2O = L-glutamyl-[protein] + NH4(+). In terms of biological role, probably deamidates glutamine residues to glutamate on methyl-accepting chemotaxis receptors (MCPs), playing an important role in chemotaxis. This chain is Probable chemoreceptor glutamine deamidase CheD, found in Bdellovibrio bacteriovorus (strain ATCC 15356 / DSM 50701 / NCIMB 9529 / HD100).